Reading from the N-terminus, the 1027-residue chain is Fibril-forming collagen alpha chain (1027 aa).

Positions 1–12 (YRAGPRYIQAQV) are nonhelical region (N-terminal). Positions 1 to 1027 (YRAGPRYIQA…GPPGNSDYGA (1027 aa)) are disordered. Residues 13–1023 (GPIGPRGPPG…PGPPGPPGNS (1011 aa)) form a triple-helical region region. Residues 17-26 (PRGPPGPPGS) are compositionally biased toward pro residues. 4-hydroxyproline; partial occurs at positions 21 and 24. Residues Pro27 and Pro39 each carry the 4-hydroxyproline modification. 3-hydroxyproline; partial is present on Pro53. Pro54 bears the 4-hydroxyproline mark. A compositionally biased stretch (basic and acidic residues) spans 63–72 (SGDDGRDGEP). Pro72 is modified (4-hydroxyproline; partial). Gly residues predominate over residues 73–91 (GPRGGIGPMGPRGAGGMPG). Residues Pro90 and Pro93 each carry the 4-hydroxyproline modification. 5-hydroxylysine is present on residues Lys96 and Lys108. O-linked (Gal...) hydroxylysine glycans are attached at residues Lys96 and Lys108. Residues Pro123 and Pro128 each carry the 4-hydroxyproline; partial modification. The residue at position 150 (Pro150) is a 4-hydroxyproline. Residue Pro161 is modified to 3-hydroxyproline; partial. Pro162 carries the 4-hydroxyproline modification. The residue at position 164 (Pro164) is a 3-hydroxyproline; partial. 4-hydroxyproline occurs at positions 165, 174, 177, and 180. Over residues 168-182 (IGSTGSPGFPGTPGS) the composition is skewed to low complexity. A 5-hydroxylysine mark is found at Lys183 and Lys192. Lys192 carries O-linked (Gal...) hydroxylysine glycosylation. A 4-hydroxyproline mark is found at Pro207, Pro216, Pro219, Pro228, and Pro237. Positions 227 to 249 (EPGASGESGLPGPSGFPGPRGMP) are enriched in low complexity. 4-hydroxyproline; partial is present on Pro243. Pro249 and Pro255 each carry 4-hydroxyproline. Gly residues predominate over residues 259–268 (GAKGDGGPTG). Lys261 is modified (5-hydroxylysine). Residue Lys261 is glycosylated (O-linked (Gal...) hydroxylysine). Pro273 and Pro276 each carry 4-hydroxyproline; partial. Lys279 bears the 5-hydroxylysine mark. Residue Lys279 is glycosylated (O-linked (Gal...) hydroxylysine). A 4-hydroxyproline; partial mark is found at Pro285, Pro291, and Pro303. 5 positions are modified to 4-hydroxyproline: Pro306, Pro312, Pro321, Pro327, and Pro339. 5-hydroxylysine is present on Lys342. Pro348 is subject to 4-hydroxyproline; partial. A 5-hydroxylysine; partial modification is found at Lys351. Residues Pro366, Pro372, and Pro375 each carry the 4-hydroxyproline modification. Basic and acidic residues predominate over residues 380-396 (RPGKDGRPGIRGKDGKQ). A 4-hydroxyproline; partial modification is found at Pro381. Position 387 is a 4-hydroxyproline (Pro387). Low complexity predominate over residues 398–420 (EQGPQGPQGLAGLQGRAGPPGAR). Pro416 is subject to 3-hydroxyproline; partial. 4 positions are modified to 4-hydroxyproline: Pro417, Pro423, Pro429, and Pro432. A compositionally biased stretch (basic and acidic residues) spans 437-446 (EQGDAGKDGE). A compositionally biased stretch (low complexity) spans 447 to 480 (TGAAGPPGAAGPTGARGPPGPRGQQGFQGLAGAQ). 4-hydroxyproline is present on residues Pro453, Pro465, and Pro483. Residues Pro500, Pro503, and Pro506 each carry the 4-hydroxyproline; partial modification. Positions 502-511 (GPAGPGGERG) are enriched in gly residues. 4-hydroxyproline is present on residues Pro513 and Pro525. Residues 527–543 (ERGATGPAGPTGSPGVA) are compositionally biased toward low complexity. Pro533 and Pro536 each carry 4-hydroxyproline; partial. Pro540 carries the 4-hydroxyproline modification. At Lys546 the chain carries 5-hydroxylysine. Pro551 carries the post-translational modification 3-hydroxyproline; partial. 4-hydroxyproline occurs at positions 552 and 561. Lys567 and Lys573 each carry 5-hydroxylysine. O-linked (Gal...) hydroxylysine glycosylation is present at Lys573. Residues 575-599 (SRGDIGPRGKAGERGKDGERGERGE) show a composition bias toward basic and acidic residues. The residue at position 603 (Pro603) is a 4-hydroxyproline. Position 612 is a 5-hydroxylysine (Lys612). An O-linked (Gal...) hydroxylysine glycan is attached at Lys612. Pro621 carries the 4-hydroxyproline; partial modification. Pro627 is subject to 4-hydroxyproline. Positions 635 to 644 (PAGSQGIQGQ) are enriched in low complexity. Pro645 is modified (4-hydroxyproline; partial). Pro647 bears the 3-hydroxyproline; partial mark. Pro648 carries the 4-hydroxyproline modification. Position 657 is a 5-hydroxylysine (Lys657). Residue Lys657 is glycosylated (O-linked (Gal...) hydroxylysine). 4-hydroxyproline occurs at positions 663, 708, 711, 714, 717, and 723. Positions 698 to 710 (ETGAQGEIGLPGS) are enriched in low complexity. Residues 714-726 (PGLPGPSGQPGPS) show a composition bias toward pro residues. Lys738 bears the 5-hydroxylysine mark. O-linked (Gal...) hydroxylysine glycosylation is present at Lys738. Residues Pro744 and Pro759 each carry the 4-hydroxyproline modification. Basic and acidic residues predominate over residues 750–771 (QGDRGSDGEPGRDGTKGERGED). The residue at position 765 (Lys765) is a 5-hydroxylysine. O-linked (Gal...) hydroxylysine glycosylation occurs at Lys765. Position 773 is a 3-hydroxyproline; partial (Pro773). Residues Pro774, Pro783, and Pro792 each carry the 4-hydroxyproline modification. Over residues 802–814 (GPMGGQGMKGDGG) the composition is skewed to gly residues. Lys810 is subject to 5-hydroxylysine. O-linked (Gal...) hydroxylysine glycosylation occurs at Lys810. Pro815 is modified (3-hydroxyproline; partial). 4-hydroxyproline occurs at positions 816, 843, 849, 855, 861, 867, 888, 894, 903, and 915. Residues 828–848 (AGPQGPTGPSGQAGAPGQEGA) show a composition bias toward low complexity. Low complexity predominate over residues 884 to 894 (QRGLPGAAGPP). Positions 911-927 (PVGAPGSQGPAGIMGMK) are enriched in low complexity. Lys927 bears the 5-hydroxylysine mark. Lys927 carries an O-linked (Gal...) hydroxylysine glycan. Lys933 carries the post-translational modification 5-hydroxylysine; partial. Lys936 and Lys939 each carry 5-hydroxylysine. An O-linked (Gal...) hydroxylysine glycan is attached at Lys936. Residues 942–962 (TGLPGLQGLQGTPGHSGESGP) show a composition bias toward low complexity. A 4-hydroxyproline modification is found at Pro945. Residue Pro954 is modified to 4-hydroxyproline; partial. Pro963 and Pro966 each carry 4-hydroxyproline. A compositionally biased stretch (gly residues) spans 973–982 (GEAGGRGSQG). Residues 983-1001 (PPGKDGQPGPSGRVGPRGP) show a composition bias toward low complexity. A 4-hydroxyproline mark is found at Pro984 and Pro990. 3-hydroxyproline; partial is present on Pro1010. Pro residues predominate over residues 1010 to 1020 (PPGPPGPPGPP). Pro1011 carries the 4-hydroxyproline modification. Pro1013 is modified (3-hydroxyproline; partial). Pro1014 carries the post-translational modification 4-hydroxyproline. 3-hydroxyproline; partial is present on Pro1016. Pro1017 bears the 4-hydroxyproline mark. Pro1019 is subject to 3-hydroxyproline; partial. Position 1020 is a 4-hydroxyproline (Pro1020). Residues 1024–1027 (DYGA) are nonhelical region (C-terminal).

As to quaternary structure, homotetramer.

Its subcellular location is the secreted. The protein localises to the extracellular space. It localises to the extracellular matrix. In terms of biological role, fibril-forming collagen. This Riftia pachyptila (Vent tube worm) protein is Fibril-forming collagen alpha chain.